A 152-amino-acid chain; its full sequence is Antiholin-like protein LrgA (152 aa).

4 consecutive transmembrane segments (helical) span residues 23-43, 45-65, 77-97, and 108-128; these read YSIF…KIIE, FMPI…IALC, VGTA…ISVI, and ILII…TGFS.

The protein belongs to the CidA/LrgA family. LrgA subfamily.

The protein localises to the cell membrane. In terms of biological role, inhibits the expression or activity of extracellular murein hydrolases by interacting, possibly with LrgB, with the holin-like proteins CidA and/or CidB. The LrgAB and CidAB proteins may affect the proton motive force of the membrane. May be involved in programmed cell death (PCD), possibly triggering PCD in response to antibiotics and environmental stresses. The sequence is that of Antiholin-like protein LrgA from Staphylococcus epidermidis (strain ATCC 12228 / FDA PCI 1200).